A 578-amino-acid chain; its full sequence is L-2,3-diaminopropanoate--citrate ligase (578 aa).

This sequence belongs to the IucA/IucC family. As to quaternary structure, forms a mixture of monomer and dimer in solution.

The enzyme catalyses (S)-2,3-diaminopropanoate + citrate + ATP = 2-[(L-alanin-3-ylcarbamoyl)methyl]-2-hydroxybutanedioate + AMP + diphosphate. Its pathway is siderophore biosynthesis. Its function is as follows. Catalyzes the synthesis of citryl-L-2,3-diaminopropionic acid from L-2,3-diaminopropionic acid (L-Dap) and citrate, the first step in staphyloferrin B biosynthesis. This Staphylococcus aureus (strain NCTC 8325 / PS 47) protein is L-2,3-diaminopropanoate--citrate ligase.